The sequence spans 324 residues: Probable UDP-sugar transporter protein SLC35A4 (324 aa).

The Cytoplasmic segment spans residues 1-18 (MSVEDGGLPGLGGPGQAR). Residues 19 to 39 (WTLMLLLSTATYGAHAPLLAL) traverse the membrane as a helical segment. The Lumenal portion of the chain corresponds to 40–52 (CHVDGRVPFRPSS). The helical transmembrane segment at 53 to 73 (AVLLTELTKLLLCALSLLVGW) threads the bilayer. Over 74-85 (QAWPPRTPPWRQ) the chain is Cytoplasmic. A helical transmembrane segment spans residues 86 to 106 (AAPFALSALLYGANNNLVIHL). Over 107 to 140 (QHYMDPSTYQVLSNLKIGSTALFYCLCLRRRLSA) the chain is Lumenal. Residues 141 to 161 (RQGLALLLLMAAGACYAAGGL) traverse the membrane as a helical segment. The Cytoplasmic portion of the chain corresponds to 162–177 (RDPGSPLPESPSTAAS). A helical transmembrane segment spans residues 178–198 (GPVPLHVTAPGLLLLLLYCLI). The Lumenal segment spans residues 199-214 (SGLSSVYTELLLKRQR). The chain crosses the membrane as a helical span at residues 215–235 (LPLALQNLFLYTFGVLLNLGL). Over 236–248 (HAGGGPGPGLLEG) the chain is Cytoplasmic. A helical membrane pass occupies residues 249–271 (FSGWAALVVLSQALNGLLMSAVM). Residues 272–279 (KHGSSITR) lie on the Lumenal side of the membrane. The chain crosses the membrane as a helical span at residues 280–300 (LFVVSCSLVVNAVLSAALLRL). At 301-324 (QLTAAFFLAALLIGLAVHLYYGSR) the chain is on the cytoplasmic side.

It belongs to the nucleotide-sugar transporter family. SLC35A subfamily. In terms of assembly, found in a complex with SLC35A2 and SLC35A3.

It localises to the golgi apparatus membrane. It catalyses the reaction CDP-L-ribitol(in) + CDP(out) = CDP-L-ribitol(out) + CDP(in). Its function is as follows. Mediates the transport of CDP-ribitol. Does not exhibit CMP-sialic acid, UDP-galactose and UDP-N-acetylglucosamine transport activity. The sequence is that of Probable UDP-sugar transporter protein SLC35A4 from Sus scrofa (Pig).